The sequence spans 84 residues: Small ribosomal subunit protein uS17 (84 aa).

It belongs to the universal ribosomal protein uS17 family. Part of the 30S ribosomal subunit.

One of the primary rRNA binding proteins, it binds specifically to the 5'-end of 16S ribosomal RNA. The protein is Small ribosomal subunit protein uS17 of Proteus mirabilis (strain HI4320).